Here is a 224-residue protein sequence, read N- to C-terminus: Ribose-5-phosphate isomerase A (224 aa).

Substrate is bound by residues 26-29 (TGST), 81-84 (DGAD), and 94-97 (KGGG). The Proton acceptor role is filled by Glu-103. Residue Lys-121 participates in substrate binding.

The protein belongs to the ribose 5-phosphate isomerase family. In terms of assembly, homodimer.

The enzyme catalyses aldehydo-D-ribose 5-phosphate = D-ribulose 5-phosphate. It functions in the pathway carbohydrate degradation; pentose phosphate pathway; D-ribose 5-phosphate from D-ribulose 5-phosphate (non-oxidative stage): step 1/1. Functionally, catalyzes the reversible conversion of ribose-5-phosphate to ribulose 5-phosphate. The protein is Ribose-5-phosphate isomerase A of Listeria monocytogenes serotype 4b (strain F2365).